We begin with the raw amino-acid sequence, 219 residues long: MKKFFIIGTNTEVGKTYISTKLIEVCEHQNIKSLCLKPVASGQSQFSELCEDVESILNAYKHKFTAAEINLISFNQAVAPHIIAAKTKVDISIENLKQFIEDKYNQDLDILFIEGAGGLLTPYSDHTTQLDLIKALQIPVLLVSAIKVGCINHTLLTINELNRHNIKLAGWIANCNDSNIKYIDEQINTIEELSGYKCSAKISRNADYLDFIDLSKILI.

ATP is bound at residue 12 to 17; that stretch reads EVGKTY. Thr16 contributes to the Mg(2+) binding site. The active site involves Lys37. Ser41 is a substrate binding site. ATP contacts are provided by residues Asp52, 114–117, and 174–175; these read EGAG and NC. 2 residues coordinate Mg(2+): Asp52 and Glu114.

The protein belongs to the dethiobiotin synthetase family. Homodimer. Mg(2+) serves as cofactor.

It localises to the cytoplasm. The catalysed reaction is (7R,8S)-7,8-diammoniononanoate + CO2 + ATP = (4R,5S)-dethiobiotin + ADP + phosphate + 3 H(+). The protein operates within cofactor biosynthesis; biotin biosynthesis; biotin from 7,8-diaminononanoate: step 1/2. Its function is as follows. Catalyzes a mechanistically unusual reaction, the ATP-dependent insertion of CO2 between the N7 and N8 nitrogen atoms of 7,8-diaminopelargonic acid (DAPA, also called 7,8-diammoniononanoate) to form a ureido ring. The chain is ATP-dependent dethiobiotin synthetase BioD from Francisella tularensis subsp. holarctica (strain FTNF002-00 / FTA).